We begin with the raw amino-acid sequence, 560 residues long: Serine/threonine-protein kinase TOS3 (560 aa).

Residues 50–344 form the Protein kinase domain; the sequence is FEILATLGNG…LADIKVHPFM (295 aa). ATP-binding positions include 56–64 and K79; that span reads LGNGQYGKV. D189 functions as the Proton acceptor in the catalytic mechanism.

It belongs to the protein kinase superfamily. Ser/Thr protein kinase family. In terms of processing, autophosphorylated.

The catalysed reaction is L-seryl-[protein] + ATP = O-phospho-L-seryl-[protein] + ADP + H(+). It carries out the reaction L-threonyl-[protein] + ATP = O-phospho-L-threonyl-[protein] + ADP + H(+). One of the three SNF1 protein kinases (with SAK1 and ELM1) which are required for growth on nonfermentable carbon sources and nonpreferred sugars and for response to environmental stress. Activates SNF1 by phosphorylation of its activation-loop 'Thr-210'. Required for the regulation by SNF1 of the transcription of a large set of genes, the modification the activity of metabolic enzymes, and the control of various nutrient-responsive cellular developmental processes. Also phosphorylates GAL83, MIG1 and SIP2. The protein is Serine/threonine-protein kinase TOS3 (TOS3) of Saccharomyces cerevisiae (strain ATCC 204508 / S288c) (Baker's yeast).